The following is a 715-amino-acid chain: Ribosomal RNA large subunit methyltransferase K/L (715 aa).

In terms of domain architecture, THUMP spans 43 to 154 (TQYRALLWSR…RDDLVLSLDL (112 aa)).

It belongs to the methyltransferase superfamily. RlmKL family.

It localises to the cytoplasm. The enzyme catalyses guanosine(2445) in 23S rRNA + S-adenosyl-L-methionine = N(2)-methylguanosine(2445) in 23S rRNA + S-adenosyl-L-homocysteine + H(+). It carries out the reaction guanosine(2069) in 23S rRNA + S-adenosyl-L-methionine = N(2)-methylguanosine(2069) in 23S rRNA + S-adenosyl-L-homocysteine + H(+). Its function is as follows. Specifically methylates the guanine in position 2445 (m2G2445) and the guanine in position 2069 (m7G2069) of 23S rRNA. This is Ribosomal RNA large subunit methyltransferase K/L from Mannheimia succiniciproducens (strain KCTC 0769BP / MBEL55E).